The following is a 100-amino-acid chain: NADH-quinone oxidoreductase subunit K (100 aa).

Helical transmembrane passes span 4–24 (VTWY…GVLL), 29–49 (LIVM…FLAF), and 61–81 (IAFF…AVVI).

The protein belongs to the complex I subunit 4L family. NDH-1 is composed of 14 different subunits. Subunits NuoA, H, J, K, L, M, N constitute the membrane sector of the complex.

Its subcellular location is the cell inner membrane. The catalysed reaction is a quinone + NADH + 5 H(+)(in) = a quinol + NAD(+) + 4 H(+)(out). Its function is as follows. NDH-1 shuttles electrons from NADH, via FMN and iron-sulfur (Fe-S) centers, to quinones in the respiratory chain. The immediate electron acceptor for the enzyme in this species is believed to be ubiquinone. Couples the redox reaction to proton translocation (for every two electrons transferred, four hydrogen ions are translocated across the cytoplasmic membrane), and thus conserves the redox energy in a proton gradient. This Anaeromyxobacter sp. (strain Fw109-5) protein is NADH-quinone oxidoreductase subunit K.